The following is a 555-amino-acid chain: Phosphomethylpyrimidine synthase (555 aa).

Substrate is bound by residues Asn-191, Met-220, Tyr-249, His-285, 305-307 (SRG), 346-349 (DGLR), and Glu-385. Residue His-389 coordinates Zn(2+). Residue Tyr-412 participates in substrate binding. His-453 lines the Zn(2+) pocket. 3 residues coordinate [4Fe-4S] cluster: Cys-533, Cys-536, and Cys-541.

This sequence belongs to the ThiC family. As to quaternary structure, homodimer. [4Fe-4S] cluster is required as a cofactor.

It carries out the reaction 5-amino-1-(5-phospho-beta-D-ribosyl)imidazole + S-adenosyl-L-methionine = 4-amino-2-methyl-5-(phosphooxymethyl)pyrimidine + CO + 5'-deoxyadenosine + formate + L-methionine + 3 H(+). It participates in cofactor biosynthesis; thiamine diphosphate biosynthesis. Functionally, catalyzes the synthesis of the hydroxymethylpyrimidine phosphate (HMP-P) moiety of thiamine from aminoimidazole ribotide (AIR) in a radical S-adenosyl-L-methionine (SAM)-dependent reaction. This is Phosphomethylpyrimidine synthase from Ehrlichia ruminantium (strain Gardel).